We begin with the raw amino-acid sequence, 95 residues long: Aspartyl/glutamyl-tRNA(Asn/Gln) amidotransferase subunit C (95 aa).

This sequence belongs to the GatC family. As to quaternary structure, heterotrimer of A, B and C subunits.

It carries out the reaction L-glutamyl-tRNA(Gln) + L-glutamine + ATP + H2O = L-glutaminyl-tRNA(Gln) + L-glutamate + ADP + phosphate + H(+). It catalyses the reaction L-aspartyl-tRNA(Asn) + L-glutamine + ATP + H2O = L-asparaginyl-tRNA(Asn) + L-glutamate + ADP + phosphate + 2 H(+). Its function is as follows. Allows the formation of correctly charged Asn-tRNA(Asn) or Gln-tRNA(Gln) through the transamidation of misacylated Asp-tRNA(Asn) or Glu-tRNA(Gln) in organisms which lack either or both of asparaginyl-tRNA or glutaminyl-tRNA synthetases. The reaction takes place in the presence of glutamine and ATP through an activated phospho-Asp-tRNA(Asn) or phospho-Glu-tRNA(Gln). The protein is Aspartyl/glutamyl-tRNA(Asn/Gln) amidotransferase subunit C of Nitrobacter winogradskyi (strain ATCC 25391 / DSM 10237 / CIP 104748 / NCIMB 11846 / Nb-255).